Reading from the N-terminus, the 497-residue chain is Catalase-2 (497 aa).

Catalysis depends on residues H71 and N144. Heme is bound at residue Y354.

Belongs to the catalase family. The cofactor is heme.

It carries out the reaction 2 H2O2 = O2 + 2 H2O. Its function is as follows. Catalase involved in the oxidative stress response serving to protect cells from toxicity. For instance plays a role in defending against oxidative damage induced by excessive copper stress. Not required for maintaining normal lifespan. This is Catalase-2 from Caenorhabditis elegans.